Reading from the N-terminus, the 293-residue chain is MIEAVDLHFCYGDAEVLKGVNFKAERGKVTVLMGRNGAGKTTLLKHLNGLLRPKSGKVIIDGRELKYDRKSLLEVRKRVFYVFQNPDDQILSPTVWQDVAFGPRNLGLKGERLERVVRNALEAVGLSGYEKRLCSTLSGGEKRRLAIASALAMNPDYCIMDEPSANVDGEGLRMIAEIIRKLREEGKGVVVSTHDADLAKEVGDYFYFMDDGKIVWEGEEFSYSVARKLGIRSFSLGKVILAESKIDDHPCFSADELERAVLKAFEGETVVVLGRDDWVIKELEKYPLEVERL.

The ABC transporter domain occupies 2–236 (IEAVDLHFCY…RKLGIRSFSL (235 aa)). Residue 34–41 (GRNGAGKT) participates in ATP binding.

It belongs to the ABC transporter superfamily.

It is found in the cell membrane. In terms of biological role, probably part of an ABC transporter complex. Responsible for energy coupling to the transport system. The protein is Putative ABC transporter ATP-binding protein AF_0731 of Archaeoglobus fulgidus (strain ATCC 49558 / DSM 4304 / JCM 9628 / NBRC 100126 / VC-16).